Here is a 200-residue protein sequence, read N- to C-terminus: Holliday junction branch migration complex subunit RuvA (200 aa).

The domain I stretch occupies residues 1-64 (MITSIQGTLV…EDSQTLYGFA (64 aa)). The interval 65 to 144 (SPAERDFFRL…ATGAAPGLAT (80 aa)) is domain II. The flexible linker stretch occupies residues 145–151 (QPAAAAS). Positions 152 to 200 (PGASAHRDAVAALVALGYRSADADEAVRRASLALGEAATTESLIKKALS) are domain III.

It belongs to the RuvA family. Homotetramer. Forms an RuvA(8)-RuvB(12)-Holliday junction (HJ) complex. HJ DNA is sandwiched between 2 RuvA tetramers; dsDNA enters through RuvA and exits via RuvB. An RuvB hexamer assembles on each DNA strand where it exits the tetramer. Each RuvB hexamer is contacted by two RuvA subunits (via domain III) on 2 adjacent RuvB subunits; this complex drives branch migration. In the full resolvosome a probable DNA-RuvA(4)-RuvB(12)-RuvC(2) complex forms which resolves the HJ.

Its subcellular location is the cytoplasm. The RuvA-RuvB-RuvC complex processes Holliday junction (HJ) DNA during genetic recombination and DNA repair, while the RuvA-RuvB complex plays an important role in the rescue of blocked DNA replication forks via replication fork reversal (RFR). RuvA specifically binds to HJ cruciform DNA, conferring on it an open structure. The RuvB hexamer acts as an ATP-dependent pump, pulling dsDNA into and through the RuvAB complex. HJ branch migration allows RuvC to scan DNA until it finds its consensus sequence, where it cleaves and resolves the cruciform DNA. The sequence is that of Holliday junction branch migration complex subunit RuvA from Opitutus terrae (strain DSM 11246 / JCM 15787 / PB90-1).